Here is a 20-residue protein sequence, read N- to C-terminus: Apidaecin 1+ (20 aa).

Residues 1–20 (GKPNRPRPAPIQPRPPHPRL) are disordered.

It belongs to the apidaecin family.

It localises to the secreted. Functionally, antimicrobial peptide active against many Gram-negative enterobacterial and plant-associated bacterial species. Not active against other bacterial species like H.pylori, P.mirabilis, B.pertussis or N.gonorrhoeae. In terms of biological role, among others, also active against C.jejuni and L.pneumophila but not against Y.enterocolitica. Its function is as follows. Among others, also active against Y.enterocolitica butnot against L.pneumophila and C.jejuni. This is Apidaecin 1+ from Pimpla disparis (Parasitic wasp).